The primary structure comprises 725 residues: Phosphoribosylformylglycinamidine synthase subunit PurL (725 aa).

Histidine 34 is a catalytic residue. Tyrosine 37 lines the ATP pocket. Glutamate 93 provides a ligand contact to Mg(2+). Substrate-binding positions include 94 to 97 and arginine 116; that span reads SHNH. The active-site Proton acceptor is histidine 95. Aspartate 117 is a binding site for Mg(2+). The segment at 220 to 241 is disordered; the sequence is GASFASEDLSEDAETEDRPAVQ. Glutamine 241 contacts substrate. Aspartate 269 contributes to the Mg(2+) binding site. 313–315 is a binding site for substrate; the sequence is ESQ. Aspartate 489 and glycine 526 together coordinate ATP. Asparagine 527 serves as a coordination point for Mg(2+). A substrate-binding site is contributed by serine 529.

The protein belongs to the FGAMS family. As to quaternary structure, monomer. Part of the FGAM synthase complex composed of 1 PurL, 1 PurQ and 2 PurS subunits.

The protein resides in the cytoplasm. The enzyme catalyses N(2)-formyl-N(1)-(5-phospho-beta-D-ribosyl)glycinamide + L-glutamine + ATP + H2O = 2-formamido-N(1)-(5-O-phospho-beta-D-ribosyl)acetamidine + L-glutamate + ADP + phosphate + H(+). Its pathway is purine metabolism; IMP biosynthesis via de novo pathway; 5-amino-1-(5-phospho-D-ribosyl)imidazole from N(2)-formyl-N(1)-(5-phospho-D-ribosyl)glycinamide: step 1/2. In terms of biological role, part of the phosphoribosylformylglycinamidine synthase complex involved in the purines biosynthetic pathway. Catalyzes the ATP-dependent conversion of formylglycinamide ribonucleotide (FGAR) and glutamine to yield formylglycinamidine ribonucleotide (FGAM) and glutamate. The FGAM synthase complex is composed of three subunits. PurQ produces an ammonia molecule by converting glutamine to glutamate. PurL transfers the ammonia molecule to FGAR to form FGAM in an ATP-dependent manner. PurS interacts with PurQ and PurL and is thought to assist in the transfer of the ammonia molecule from PurQ to PurL. This chain is Phosphoribosylformylglycinamidine synthase subunit PurL, found in Haloquadratum walsbyi (strain DSM 16790 / HBSQ001).